Here is a 1053-residue protein sequence, read N- to C-terminus: Focal adhesion kinase 1 (1053 aa).

The disordered stretch occupies residues 1-27; sequence MAAAYLDPNLNHTPSSSAKTHLGTGME. Over residues 10 to 19 the composition is skewed to polar residues; sequence LNHTPSSSAK. The FERM domain maps to 35 to 355; sequence RVLKVFHYFE…GYCRLVNGAT (321 aa). Phosphotyrosine; by autocatalysis is present on Y397. Y407 is subject to Phosphotyrosine. The Protein kinase domain maps to 422 to 680; it reads IELGRCIGEG…ELKAQLSTIL (259 aa). ATP contacts are provided by residues 428–434, K454, and 500–502; these read IGEGQFG and ELC. Residue D546 is the Proton acceptor of the active site. Y576 and Y577 each carry phosphotyrosine; by SRC. Over residues 686-697 the composition is skewed to basic and acidic residues; the sequence is QQEERMRMESRR. Disordered regions lie at residues 686–741 and 843–892; these read QQEE…QPNH and RGSI…LASL. Residue Y863 is modified to Phosphotyrosine. At S911 the chain carries Phosphoserine. Phosphotyrosine is present on Y926.

It belongs to the protein kinase superfamily. Tyr protein kinase family. FAK subfamily. In terms of assembly, interacts with ARHGAP26, GRB7, DCC, PIK3R1, PXN and SRC. Interacts with the ARP2/3 complex. In terms of processing, phosphorylated on tyrosine residues upon activation, e.g. upon integrin signaling. Tyr-397 is the major autophosphorylation site, but other kinases can also phosphorylate this residue. Phosphorylation at Tyr-397 promotes interaction with SRC and SRC family members, leading to phosphorylation at Tyr-576, Tyr-577 and at additional tyrosine residues. Isoform 2 is phosphorylated on serine or threonine residues, but apparently not on tyrosine residues.

It is found in the cell junction. The protein localises to the focal adhesion. The protein resides in the cell membrane. It localises to the cytoplasm. Its subcellular location is the perinuclear region. It is found in the cell cortex. The protein localises to the cytoskeleton. The protein resides in the microtubule organizing center. It localises to the centrosome. Its subcellular location is the nucleus. It is found in the cilium basal body. The enzyme catalyses L-tyrosyl-[protein] + ATP = O-phospho-L-tyrosyl-[protein] + ADP + H(+). Subject to autoinhibition, mediated by interactions between the FERM domain and the kinase domain. Activated by autophosphorylation at Tyr-397. This promotes interaction with SRC and phosphorylation at Tyr-576 and Tyr-577 in the kinase activation loop. Phosphorylation at Tyr-576 and Tyr-577 is required for maximal kinase activity. Inhibited by TAE226. In terms of biological role, non-receptor protein-tyrosine kinase that plays an essential role in regulating cell migration, adhesion, spreading, reorganization of the actin cytoskeleton, formation and disassembly of focal adhesions and cell protrusions, cell cycle progression, cell proliferation and apoptosis. Required for early embryonic development, embryonic angiogenesis, normal cardiomyocyte migration and proliferation, and normal heart development. Regulates axon growth and neuronal cell migration, axon branching and synapse formation; required for normal development of the nervous system. Plays a role in osteogenesis and differentiation of osteoblasts. Functions in integrin signal transduction, but also in signaling downstream of numerous growth factor receptors, G-protein coupled receptors (GPCR), ephrin receptors, netrin receptors and LDL receptors. Forms multisubunit signaling complexes with SRC and SRC family members upon activation; this leads to the phosphorylation of additional tyrosine residues, creating binding sites for scaffold proteins, effectors and substrates. Regulates numerous signaling pathways. Promotes activation of phosphatidylinositol 3-kinase and the AKT1 signaling cascade. Promotes activation of MAPK1/ERK2, MAPK3/ERK1 and the MAP kinase signaling cascade. Promotes localized and transient activation of guanine nucleotide exchange factors (GEFs) and GTPase-activating proteins (GAPs), and thereby modulates the activity of Rho family GTPases. Signaling via CAS family members mediates activation of RAC1. Regulates P53/TP53 activity and stability. Phosphorylates SRC; this increases SRC kinase activity. Isoform 2 (FRNK) does not contain a kinase domain and inhibits PTK2/FAK1 phosphorylation and signaling. In Gallus gallus (Chicken), this protein is Focal adhesion kinase 1 (PTK2).